A 540-amino-acid chain; its full sequence is MAKDIKFSADARSAMVRGVDILADTVKVTLGPKGRNVVLEKSFGSPLITNDGVTIAKEIELEDHFENMGAKLVSEVASKTNDIAGDGTTTATVLTQAIVREGIKNVTAGANPIGIRRGIEAAVATAVSALKETAIPVSNKEAIAQVAAVSSRSEKVGEYISEAMEKVGNDGVITIEESKGMETELDVVEGMQFDRGYLSQYMVTDSEKMVADLDNPYILITDKKISNIQEILPLLESILKTNRPLLIIADDVDGEALPTLVLNKIRGTFNVVAVKAPGFGDRRKAMLEDIAILTGGTVITEDLGLELKDATIEALGQASKVTVDKDSTVIVEGAGNPEAIANRVAVIKSQIESATSEFDKEKLQERLAKLSGGVAVIKVGAATETELKEMKLRIEDALNATRAAVEEGIVSGGGTAFVSVLDAVSGIELTGDEATGRNIVLRALEEPVRQIALNAGFEGSIVIDRLKNSEAGAGFNAATGEWVNMIEAGIIDPVKVTRSALQNAASVASLILTTEAVVANQPEPASPAPAMDPSMMGGMM.

Residues 29-32, 86-90, G413, 476-478, and D492 each bind ATP; these read TLGP, DGTTT, and NAA.

It belongs to the chaperonin (HSP60) family. In terms of assembly, forms a cylinder of 14 subunits composed of two heptameric rings stacked back-to-back. Interacts with the co-chaperonin GroES.

Its subcellular location is the cytoplasm. The catalysed reaction is ATP + H2O + a folded polypeptide = ADP + phosphate + an unfolded polypeptide.. Its function is as follows. Together with its co-chaperonin GroES, plays an essential role in assisting protein folding. The GroEL-GroES system forms a nano-cage that allows encapsulation of the non-native substrate proteins and provides a physical environment optimized to promote and accelerate protein folding. In Streptococcus gordonii (strain Challis / ATCC 35105 / BCRC 15272 / CH1 / DL1 / V288), this protein is Chaperonin GroEL.